The following is a 442-amino-acid chain: tRNA-2-methylthio-N(6)-dimethylallyladenosine synthase (442 aa).

Positions 5 to 122 (KKVFIKTLGC…LPEMIKQKQK (118 aa)) constitute an MTTase N-terminal domain. Residues cysteine 14, cysteine 51, cysteine 85, cysteine 159, cysteine 163, and cysteine 166 each contribute to the [4Fe-4S] cluster site. Residues 145-378 (KAEGAKAYVS…DLLNSNAQII (234 aa)) enclose the Radical SAM core domain. The 63-residue stretch at 380-442 (RQMVGTNQRI…LPNSLRGELI (63 aa)) folds into the TRAM domain.

It belongs to the methylthiotransferase family. MiaB subfamily. In terms of assembly, monomer. Requires [4Fe-4S] cluster as cofactor.

It localises to the cytoplasm. The enzyme catalyses N(6)-dimethylallyladenosine(37) in tRNA + (sulfur carrier)-SH + AH2 + 2 S-adenosyl-L-methionine = 2-methylsulfanyl-N(6)-dimethylallyladenosine(37) in tRNA + (sulfur carrier)-H + 5'-deoxyadenosine + L-methionine + A + S-adenosyl-L-homocysteine + 2 H(+). In terms of biological role, catalyzes the methylthiolation of N6-(dimethylallyl)adenosine (i(6)A), leading to the formation of 2-methylthio-N6-(dimethylallyl)adenosine (ms(2)i(6)A) at position 37 in tRNAs that read codons beginning with uridine. The polypeptide is tRNA-2-methylthio-N(6)-dimethylallyladenosine synthase (Francisella tularensis subsp. tularensis (strain FSC 198)).